The chain runs to 50 residues: Sperm protamine P1 (50 aa).

The protein belongs to the protamine P1 family. In terms of tissue distribution, testis.

The protein localises to the nucleus. It localises to the chromosome. Protamines substitute for histones in the chromatin of sperm during the haploid phase of spermatogenesis. They compact sperm DNA into a highly condensed, stable and inactive complex. This is Sperm protamine P1 (PRM1) from Chilonatalus micropus (Cuban funnel-eared bat).